Reading from the N-terminus, the 137-residue chain is Lysozyme (137 aa).

The first 18 residues, 1–18 (MQKLIIFALVVLCVGSEA), serve as a signal peptide directing secretion. A C-type lysozyme domain is found at 19–137 (KTFTRCGLVH…QGSLPDISSC (119 aa)). 4 disulfides stabilise this stretch: C24/C137, C45/C127, C79/C93, and C89/C107. Residues E50 and D67 contribute to the active site.

Belongs to the glycosyl hydrolase 22 family.

It carries out the reaction Hydrolysis of (1-&gt;4)-beta-linkages between N-acetylmuramic acid and N-acetyl-D-glucosamine residues in a peptidoglycan and between N-acetyl-D-glucosamine residues in chitodextrins.. Its function is as follows. Lysozymes have primarily a bacteriolytic function; those in tissues and body fluids are associated with the monocyte-macrophage system and enhance the activity of immunoagents. Active against E.coli and M.luteus. This chain is Lysozyme, found in Bombyx mori (Silk moth).